The chain runs to 440 residues: Probable circularly permuted 1,3-beta-glucanase (440 aa).

The first 20 residues, 1-20 (MHYSLFFGAALAASVSTVSA), serve as a signal peptide directing secretion. A compositionally biased stretch (basic and acidic residues) spans 100-112 (GEKPKRELKPSIH). 2 disordered regions span residues 100–126 (GEKPKRELKPSIHERRHGHSHQRFHEK) and 153–195 (PAAP…VAPG). Positions 113–125 (ERRHGHSHQRFHE) are enriched in basic residues. The span at 153–164 (PAAPTSAPGAPG) shows a compositional bias: low complexity. The span at 177–186 (GGDKPKDPKP) shows a compositional bias: basic and acidic residues. Residues 350-355 (EFDVLE) carry the ExDxxE motif motif.

This sequence belongs to the PGA52 family.

The protein resides in the secreted. It carries out the reaction Hydrolysis of (1-&gt;3)-beta-D-glucosidic linkages in (1-&gt;3)-beta-D-glucans.. Its function is as follows. Probable circularly permuted 1,3-beta-glucanase involved in cell wall modification through beta-1,3-glucan network alterations such as increased branching or remodeling. The sequence is that of Probable circularly permuted 1,3-beta-glucanase from Arthroderma benhamiae (strain ATCC MYA-4681 / CBS 112371) (Trichophyton mentagrophytes).